The chain runs to 113 residues: U11-theraphotoxin-Hhn1t (113 aa).

The first 21 residues, 1 to 21 (MNTVRVTFLLVFVLAVSLGQA), serve as a signal peptide directing secretion. A propeptide spanning residues 22–74 (DKDENRMEMQEKTEQGKSYLDFAENLLLQKLEELEAKLLEEDSEESRNSRQKR) is cleaved from the precursor. Residues 60-69 (LEEDSEESRN) are compositionally biased toward basic and acidic residues. Residues 60 to 83 (LEEDSEESRNSRQKRCIGEGVPCD) form a disordered region. 3 disulfide bridges follow: Cys75-Cys90, Cys82-Cys95, and Cys89-Cys110.

This sequence belongs to the neurotoxin 14 (magi-1) family. 01 (HNTX-16) subfamily. As to expression, expressed by the venom gland.

It is found in the secreted. In terms of biological role, probable ion channel inhibitor. The chain is U11-theraphotoxin-Hhn1t from Cyriopagopus hainanus (Chinese bird spider).